The primary structure comprises 236 residues: uncharacterized protein (236 aa).

The helical transmembrane segment at 52-72 threads the bilayer; that stretch reads FFPYIALFQIIMLIILLILYF. The segment at 183-236 is disordered; it reads SDKREHDDEELSFTTEMETITTETETSSTIPHLRSLPIKSESSMETTSEETDEE. A compositionally biased stretch (low complexity) spans 196–212; the sequence is TTEMETITTETETSSTI.

It is found in the membrane. This is an uncharacterized protein from Acheta domesticus (House cricket).